Reading from the N-terminus, the 104-residue chain is MYAIIKTGGKQYKVEKGVSLVVEKLKGVEAGQEVILREVLLLADGEKLTVGKPIIESARVVAKVVSQKRGPKVLVFKRKPKKGYKKLQGHRQYVTELEITGINT.

This sequence belongs to the bacterial ribosomal protein bL21 family. Part of the 50S ribosomal subunit. Contacts protein L20.

In terms of biological role, this protein binds to 23S rRNA in the presence of protein L20. The chain is Large ribosomal subunit protein bL21 from Endomicrobium trichonymphae.